Here is a 423-residue protein sequence, read N- to C-terminus: MASALEQFVNNVRQLSAQGQMTQLCELINKSGELLAKNLSHLDTVLGALDIQEHSLGVLAVLFVKFSMPNIPDFETLFSQVQLFISTCNGEHIRYATDTFAGLCHQLTNALVERKQPLRGISILKQAIDKMQMNTNQLTSVHADLCQLCLLAKCFKPAVPFLELDMMDICKENGAYDAKHFLCYYYYGGMIYTGLKNFERALYFFEQAITTPAMAVSHIMLEAYKKYILVSLILHGKVQQLPKYTSQIVGRFIKPLSNAYHELAQIYATNNPAELRALVNKHSETFTRDNNTGLVKQCLSSLYKKNIQRLTKTFLTLSLQDMASRVQLSGPQEAEKYVLHMIEDGEIYASINQKDGMVCFHDNPEKYNNPAMLHKIDQEMLKCIELDEKLKSMDQEITVNPQFVQKSMGTQEDDVGSKTSSYS.

One can recognise a PCI domain in the interval 197 to 365; that stretch reads NFERALYFFE…GMVCFHDNPE (169 aa). The interval 402 to 423 is disordered; sequence QFVQKSMGTQEDDVGSKTSSYS.

It belongs to the CSN3 family. As to quaternary structure, component of the CSN complex, probably composed of cops1, cops2, cops3, cops4, cops5, cops6, cops7, cops8 and cops9.

The protein resides in the cytoplasm. It is found in the nucleus. Component of the COP9 signalosome complex (CSN), a complex involved in various cellular and developmental processes. The CSN complex is an essential regulator of the ubiquitin (Ubl) conjugation pathway by mediating the deneddylation of the cullin subunits of E3 ligase complexes, leading to modify the Ubl ligase activity. The sequence is that of COP9 signalosome complex subunit 3 (cops3) from Danio rerio (Zebrafish).